We begin with the raw amino-acid sequence, 181 residues long: Ribosome-recycling factor (181 aa).

It belongs to the RRF family.

It localises to the cytoplasm. Its function is as follows. Responsible for the release of ribosomes from messenger RNA at the termination of protein biosynthesis. May increase the efficiency of translation by recycling ribosomes from one round of translation to another. The protein is Ribosome-recycling factor of Tropheryma whipplei (strain TW08/27) (Whipple's bacillus).